The following is a 531-amino-acid chain: T-complex protein 1 subunit zeta (531 aa).

An N-acetylalanine modification is found at Ala-2. The residue at position 5 (Lys-5) is an N6-acetyllysine. Gly-39 contributes to the ADP binding site. Gly-39 lines the ATP pocket. Asp-90 contacts Mg(2+). 6 residues coordinate ADP: Gly-91, Thr-92, Thr-93, Ser-94, Thr-158, and Lys-159. Residues Gly-91, Thr-92, and Thr-93 each coordinate ATP. Lys-199 carries the N6-acetyllysine modification. Position 205 is a phosphoserine (Ser-205). Lys-251 participates in a covalent cross-link: Glycyl lysine isopeptide (Lys-Gly) (interchain with G-Cter in SUMO2). An N6-acetyllysine mark is found at Lys-287, Lys-365, Lys-377, and Lys-388. Ala-411 lines the ADP pocket. Residues Ala-411, Gly-412, Asp-496, and Lys-501 each coordinate ATP. Asp-496 is a binding site for ADP.

This sequence belongs to the TCP-1 chaperonin family. As to quaternary structure, component of the chaperonin-containing T-complex (TRiC), a hexadecamer composed of two identical back-to-back stacked rings enclosing a protein folding chamber. Each ring is made up of eight different subunits: TCP1/CCT1, CCT2, CCT3, CCT4, CCT5, CCT6A/CCT6, CCT7, CCT8. Interacts with PACRG.

Its subcellular location is the cytoplasm. The enzyme catalyses ATP + H2O = ADP + phosphate + H(+). In terms of biological role, component of the chaperonin-containing T-complex (TRiC), a molecular chaperone complex that assists the folding of actin, tubulin and other proteins upon ATP hydrolysis. The TRiC complex mediates the folding of WRAP53/TCAB1, thereby regulating telomere maintenance. This chain is T-complex protein 1 subunit zeta (CCT6A), found in Bos taurus (Bovine).